The sequence spans 279 residues: tRNA (guanine-N(1)-)-methyltransferase (279 aa).

S-adenosyl-L-methionine is bound by residues Gly132 and 152 to 157 (IGDYVL).

The protein belongs to the RNA methyltransferase TrmD family. As to quaternary structure, homodimer.

It is found in the cytoplasm. The catalysed reaction is guanosine(37) in tRNA + S-adenosyl-L-methionine = N(1)-methylguanosine(37) in tRNA + S-adenosyl-L-homocysteine + H(+). In terms of biological role, specifically methylates guanosine-37 in various tRNAs. This chain is tRNA (guanine-N(1)-)-methyltransferase, found in Saccharophagus degradans (strain 2-40 / ATCC 43961 / DSM 17024).